Here is a 525-residue protein sequence, read N- to C-terminus: GMP synthase [glutamine-hydrolyzing] (525 aa).

Residues 9–207 enclose the Glutamine amidotransferase type-1 domain; that stretch reads RILILDFGSQ…VRDICQCEAL (199 aa). Cysteine 86 functions as the Nucleophile in the catalytic mechanism. Residues histidine 181 and glutamate 183 contribute to the active site. Residues 208–400 form the GMPS ATP-PPase domain; the sequence is WTPAKIIDDA…LGLPYDMLYR (193 aa). 235 to 241 lines the ATP pocket; the sequence is SGGVDSS.

As to quaternary structure, homodimer.

It catalyses the reaction XMP + L-glutamine + ATP + H2O = GMP + L-glutamate + AMP + diphosphate + 2 H(+). The protein operates within purine metabolism; GMP biosynthesis; GMP from XMP (L-Gln route): step 1/1. Its function is as follows. Catalyzes the synthesis of GMP from XMP. The protein is GMP synthase [glutamine-hydrolyzing] of Shigella flexneri serotype 5b (strain 8401).